Reading from the N-terminus, the 101-residue chain is Urease subunit beta (101 aa).

The protein belongs to the urease beta subunit family. In terms of assembly, heterotrimer of UreA (gamma), UreB (beta) and UreC (alpha) subunits. Three heterotrimers associate to form the active enzyme.

It is found in the cytoplasm. It catalyses the reaction urea + 2 H2O + H(+) = hydrogencarbonate + 2 NH4(+). The protein operates within nitrogen metabolism; urea degradation; CO(2) and NH(3) from urea (urease route): step 1/1. The sequence is that of Urease subunit beta from Jannaschia sp. (strain CCS1).